A 251-amino-acid polypeptide reads, in one-letter code: Ubiquinone/menaquinone biosynthesis C-methyltransferase UbiE (251 aa).

S-adenosyl-L-methionine is bound by residues Thr-74, Asp-95, and 123–124 (NA).

It belongs to the class I-like SAM-binding methyltransferase superfamily. MenG/UbiE family.

It catalyses the reaction a 2-demethylmenaquinol + S-adenosyl-L-methionine = a menaquinol + S-adenosyl-L-homocysteine + H(+). The catalysed reaction is a 2-methoxy-6-(all-trans-polyprenyl)benzene-1,4-diol + S-adenosyl-L-methionine = a 5-methoxy-2-methyl-3-(all-trans-polyprenyl)benzene-1,4-diol + S-adenosyl-L-homocysteine + H(+). The protein operates within quinol/quinone metabolism; menaquinone biosynthesis; menaquinol from 1,4-dihydroxy-2-naphthoate: step 2/2. Its pathway is cofactor biosynthesis; ubiquinone biosynthesis. Its function is as follows. Methyltransferase required for the conversion of demethylmenaquinol (DMKH2) to menaquinol (MKH2) and the conversion of 2-polyprenyl-6-methoxy-1,4-benzoquinol (DDMQH2) to 2-polyprenyl-3-methyl-6-methoxy-1,4-benzoquinol (DMQH2). This chain is Ubiquinone/menaquinone biosynthesis C-methyltransferase UbiE, found in Edwardsiella ictaluri (strain 93-146).